A 404-amino-acid chain; its full sequence is Zinc finger CCCH domain-containing protein 15 homolog (404 aa).

The span at 1–10 (MPPKKAPPGP) shows a compositional bias: pro residues. Positions 1-71 (MPPKKAPPGP…KRKEEKEKKL (71 aa)) are disordered. Residues 12–28 (KKTEQKKKEKVIEDKTF) are compositionally biased toward basic and acidic residues. Low complexity predominate over residues 38–50 (QQKFIQQVQKQVQ). The segment covering 56 to 71 (PRQDGDKRKEEKEKKL) has biased composition (basic and acidic residues). C3H1-type zinc fingers lie at residues 94-121 (DPKS…HDLS) and 165-202 (PTTD…HALP). Thr-218 is subject to Phosphothreonine. Position 221 is a phosphoserine (Ser-221). Residues 246–270 (LAWKKRKIAEKKAKLAAEEERKKSD) adopt a coiled-coil conformation. Composition is skewed to low complexity over residues 352 to 361 (EAAKTAAAED) and 369 to 380 (PSSSAPANDAAP). The disordered stretch occupies residues 352 to 380 (EAAKTAAAEDAAADEDGPSSSAPANDAAP).

This sequence belongs to the ZC3H15/TMA46 family.

The polypeptide is Zinc finger CCCH domain-containing protein 15 homolog (Drosophila melanogaster (Fruit fly)).